The primary structure comprises 377 residues: MKFPGPLENQRLSSLLERAISREAQMWKVNVPKIPTNQNVSPSQRDEVIQWLAKLKYQFNLYPETFALASSLLDRFLATVKAHPKYLNCIAISCFFLAAKTVEEDEKIPVLKVLARDSFCGCSSSEILRMERIILDKLNWDLHTATPLDFLHIFHAIAVSARPQLLFSLPKLSPSQHLAVLTKQLLHCMACNQLLQFKGSMLALAMVSLEMEKLIPDWLPLTIELLQKAQMDSSQLIHCRELVAYHLSALQSALPLNSVYVYRPLKHTLVTCDKGAFKLHPSSVSGPDFSKDNSKPEVPVRGPAAFHLHLPAASGCKQTSAKRKVEEMEVDDFYDGIKRLYNEDNGPENVGSVCGTDLSRQEGHASPCPPLQPVSVM.

The segment at 356–377 is disordered; sequence TDLSRQEGHASPCPPLQPVSVM. Pro residues predominate over residues 367–377; that stretch reads PCPPLQPVSVM.

It belongs to the cyclin family.

This chain is Cyclin-I (Ccni), found in Mus musculus (Mouse).